The sequence spans 299 residues: ATP phosphoribosyltransferase (299 aa).

The protein belongs to the ATP phosphoribosyltransferase family. Long subfamily. In terms of assembly, equilibrium between an active dimeric form, an inactive hexameric form and higher aggregates. Interconversion between the various forms is largely reversible and is influenced by the natural substrates and inhibitors of the enzyme. Mg(2+) serves as cofactor.

The protein localises to the cytoplasm. The enzyme catalyses 1-(5-phospho-beta-D-ribosyl)-ATP + diphosphate = 5-phospho-alpha-D-ribose 1-diphosphate + ATP. It functions in the pathway amino-acid biosynthesis; L-histidine biosynthesis; L-histidine from 5-phospho-alpha-D-ribose 1-diphosphate: step 1/9. Its activity is regulated as follows. Feedback inhibited by histidine. Catalyzes the condensation of ATP and 5-phosphoribose 1-diphosphate to form N'-(5'-phosphoribosyl)-ATP (PR-ATP). Has a crucial role in the pathway because the rate of histidine biosynthesis seems to be controlled primarily by regulation of HisG enzymatic activity. This is ATP phosphoribosyltransferase from Erwinia tasmaniensis (strain DSM 17950 / CFBP 7177 / CIP 109463 / NCPPB 4357 / Et1/99).